A 356-amino-acid polypeptide reads, in one-letter code: DNA polymerase IV (356 aa).

The UmuC domain maps to 1-188; that stretch reads MDTSRKIIHI…IPVTKFYGVG (188 aa). Aspartate 11 and aspartate 106 together coordinate Mg(2+). The active site involves glutamate 107.

This sequence belongs to the DNA polymerase type-Y family. Monomer. Requires Mg(2+) as cofactor.

Its subcellular location is the cytoplasm. The catalysed reaction is DNA(n) + a 2'-deoxyribonucleoside 5'-triphosphate = DNA(n+1) + diphosphate. Its function is as follows. Poorly processive, error-prone DNA polymerase involved in untargeted mutagenesis. Copies undamaged DNA at stalled replication forks, which arise in vivo from mismatched or misaligned primer ends. These misaligned primers can be extended by PolIV. Exhibits no 3'-5' exonuclease (proofreading) activity. May be involved in translesional synthesis, in conjunction with the beta clamp from PolIII. The sequence is that of DNA polymerase IV from Listeria innocua serovar 6a (strain ATCC BAA-680 / CLIP 11262).